The primary structure comprises 412 residues: MKAISVLGSTGSIGTQTLQIAEEFPEQFKIVALTAGKNLDLVIKQIETHQPEVVSLADESLLSELSSRINSLTENKKIVKKPLLMAGAEGLNTAAAWGSADLVVTGIVGCAGLLPTLAAIEAGKDLALANKETLIAAGPVVIPALKKSGSRLLPADSEHSAIFQCLQGTPWADNARLSTGMPTPGFKSIQLTASGGAFRDWKAEDLVKATVEDATSHPNWSMGKKITVDSATLMNKGLEVIEAHYLFGLSYDQIEIIIHPQSIIHSMVELDDSSVLAQLGWPDMKLPILYCLSWPSRLKTPWPRLKLTQIGNLTFKEPDTKKYPCMELAYSAGKSGGTMPAVLNAANEKAVELFLEERFKFIDIPKVIEAICEKHKCDLNLNPSLSEILEIDNWAREEVLDYSEKNITKMQF.

NADPH is bound by residues threonine 10, glycine 11, serine 12, isoleucine 13, glycine 36, lysine 37, asparagine 38, and asparagine 130. Residue lysine 131 coordinates 1-deoxy-D-xylulose 5-phosphate. Glutamate 132 provides a ligand contact to NADPH. Mn(2+) is bound at residue aspartate 156. Residues serine 157, glutamate 158, serine 194, and histidine 217 each coordinate 1-deoxy-D-xylulose 5-phosphate. Glutamate 158 is a Mn(2+) binding site. NADPH is bound at residue glycine 223. 4 residues coordinate 1-deoxy-D-xylulose 5-phosphate: serine 230, asparagine 235, lysine 236, and glutamate 239. Glutamate 239 is a binding site for Mn(2+).

Belongs to the DXR family. Mg(2+) serves as cofactor. It depends on Mn(2+) as a cofactor.

It catalyses the reaction 2-C-methyl-D-erythritol 4-phosphate + NADP(+) = 1-deoxy-D-xylulose 5-phosphate + NADPH + H(+). The protein operates within isoprenoid biosynthesis; isopentenyl diphosphate biosynthesis via DXP pathway; isopentenyl diphosphate from 1-deoxy-D-xylulose 5-phosphate: step 1/6. Its function is as follows. Catalyzes the NADPH-dependent rearrangement and reduction of 1-deoxy-D-xylulose-5-phosphate (DXP) to 2-C-methyl-D-erythritol 4-phosphate (MEP). This chain is 1-deoxy-D-xylulose 5-phosphate reductoisomerase, found in Prochlorococcus marinus (strain NATL2A).